The following is a 741-amino-acid chain: Catalase-peroxidase (741 aa).

An N-terminal signal peptide occupies residues 1–23 (MLKKIITALGMSGMLLASSNAIA). The tryptophyl-tyrosyl-methioninium (Trp-Tyr) (with M-249) cross-link spans 102–223 (WHDAGTYRIY…YAATQMGLIY (122 aa)). The Proton acceptor role is filled by His103. The segment at residues 223-249 (YVNPEGPDGKPDIKGAASEIRQAFRAM) is a cross-link (tryptophyl-tyrosyl-methioninium (Tyr-Met) (with W-102)). Residue His264 coordinates heme b.

The protein belongs to the peroxidase family. Peroxidase/catalase subfamily. Homodimer or homotetramer. Requires heme b as cofactor. Formation of the three residue Trp-Tyr-Met cross-link is important for the catalase, but not the peroxidase activity of the enzyme.

The catalysed reaction is H2O2 + AH2 = A + 2 H2O. It carries out the reaction 2 H2O2 = O2 + 2 H2O. Its function is as follows. Bifunctional enzyme with both catalase and broad-spectrum peroxidase activity. This chain is Catalase-peroxidase, found in Francisella tularensis subsp. holarctica (strain FTNF002-00 / FTA).